Here is a 127-residue protein sequence, read N- to C-terminus: Apolipoprotein C-IV (127 aa).

Residues 1–27 (MSLLRNRLQDLPALCLCVLVLACIGAC) form the signal peptide.

This sequence belongs to the apolipoprotein C4 family.

Its subcellular location is the secreted. In terms of biological role, may participate in lipoprotein metabolism. The chain is Apolipoprotein C-IV (APOC4) from Papio anubis (Olive baboon).